A 277-amino-acid chain; its full sequence is Collectin-10 (277 aa).

Residues 1 to 27 form the signal peptide; sequence MNGFASLLRRNQFILLVLFLLQIQSLG. The disordered stretch occupies residues 40 to 107; the sequence is ATHTISPGPK…GDKGEKGLLG (68 aa). A compositionally biased stretch (basic and acidic residues) spans 49 to 64; the sequence is KGDDGEKGDPGEEGKH. The Collagen-like domain occupies 53 to 112; it reads GEKGDPGEEGKHGKVGRMGPKGIKGELGDMGDQGNIGKTGPIGKKGDKGEKGLLGIPGEK. One can recognise a C-type lectin domain in the interval 155 to 271; that stretch reads TEEKFYYIVQ…CHLTMYFVCE (117 aa). Disulfide bonds link C176/C270 and C248/C262. N258 carries an N-linked (GlcNAc...) asparagine glycan.

The protein belongs to the COLEC10/COLEC11 family. Highly expressed in liver, placenta and adrenal gland. Moderately expressed in small intestine, lung, stomach and prostate. Weakly expressed in trachea and spleen.

The protein resides in the secreted. The protein localises to the golgi apparatus. It localises to the cytoplasm. Lectin that binds to various sugars: galactose &gt; mannose = fucose &gt; N-acetylglucosamine &gt; N-acetylgalactosamine. Acts as a chemoattractant, probably involved in the regulation of cell migration. This is Collectin-10 (COLEC10) from Homo sapiens (Human).